Reading from the N-terminus, the 161-residue chain is S-protein homolog 2 (161 aa).

The N-terminal stretch at 1-24 is a signal peptide; the sequence is MDIPKQYLSLFILIIFITTKLSQA. N-linked (GlcNAc...) asparagine glycans are attached at residues Asn75, Asn106, and Asn157.

This sequence belongs to the plant self-incompatibility (S1) protein family.

It is found in the secreted. The sequence is that of S-protein homolog 2 from Arabidopsis thaliana (Mouse-ear cress).